Reading from the N-terminus, the 130-residue chain is Phosphoribosyl-AMP cyclohydrolase (130 aa).

Mg(2+) is bound at residue D77. C78 contributes to the Zn(2+) binding site. Residues D79 and D81 each contribute to the Mg(2+) site. Residues C95 and C102 each contribute to the Zn(2+) site.

Belongs to the PRA-CH family. Homodimer. It depends on Mg(2+) as a cofactor. Zn(2+) serves as cofactor.

Its subcellular location is the cytoplasm. It carries out the reaction 1-(5-phospho-beta-D-ribosyl)-5'-AMP + H2O = 1-(5-phospho-beta-D-ribosyl)-5-[(5-phospho-beta-D-ribosylamino)methylideneamino]imidazole-4-carboxamide. It participates in amino-acid biosynthesis; L-histidine biosynthesis; L-histidine from 5-phospho-alpha-D-ribose 1-diphosphate: step 3/9. Its function is as follows. Catalyzes the hydrolysis of the adenine ring of phosphoribosyl-AMP. The protein is Phosphoribosyl-AMP cyclohydrolase of Pseudomonas savastanoi pv. phaseolicola (strain 1448A / Race 6) (Pseudomonas syringae pv. phaseolicola (strain 1448A / Race 6)).